The chain runs to 411 residues: Cladofulvin cluster transcriptional coactivator claA (411 aa).

The segment covering 1–27 has biased composition (polar residues); it reads MSDSLAGNGMRQNLNRSSTSSNHTGHA. The segment at 1-32 is disordered; it reads MSDSLAGNGMRQNLNRSSTSSNHTGHAQNGRA. The HTH iclR-type domain occupies 47–117; the sequence is LACQVQSLAC…DPGHIAHTAL (71 aa). The segment at residues 77 to 96 is a DNA-binding region (H-T-H motif); it reads LHDVAELANVPASQLSRVVR.

It is found in the nucleus. Functionally, transcriptional coactivator; part of the gene cluster that mediates the biosynthesis of cladofulvin, a conidial pigment not required for virulence but that plays a role in fitness and resistance to environmental stresses including UV light and low-temperature stress. With claE, coregulates the production of cladofulvin. The polypeptide is Cladofulvin cluster transcriptional coactivator claA (Passalora fulva (Tomato leaf mold)).